Here is a 259-residue protein sequence, read N- to C-terminus: Imidazole glycerol phosphate synthase subunit HisF (259 aa).

Active-site residues include D11 and D130.

It belongs to the HisA/HisF family. Heterodimer of HisH and HisF.

The protein localises to the cytoplasm. It carries out the reaction 5-[(5-phospho-1-deoxy-D-ribulos-1-ylimino)methylamino]-1-(5-phospho-beta-D-ribosyl)imidazole-4-carboxamide + L-glutamine = D-erythro-1-(imidazol-4-yl)glycerol 3-phosphate + 5-amino-1-(5-phospho-beta-D-ribosyl)imidazole-4-carboxamide + L-glutamate + H(+). It functions in the pathway amino-acid biosynthesis; L-histidine biosynthesis; L-histidine from 5-phospho-alpha-D-ribose 1-diphosphate: step 5/9. Functionally, IGPS catalyzes the conversion of PRFAR and glutamine to IGP, AICAR and glutamate. The HisF subunit catalyzes the cyclization activity that produces IGP and AICAR from PRFAR using the ammonia provided by the HisH subunit. This chain is Imidazole glycerol phosphate synthase subunit HisF, found in Lactococcus lactis subsp. cremoris (strain MG1363).